A 616-amino-acid chain; its full sequence is Replication protein A 70 kDa DNA-binding subunit (616 aa).

An N-acetylmethionine modification is found at M1. Glycyl lysine isopeptide (Lys-Gly) (interchain with G-Cter in ubiquitin) cross-links involve residues K22 and K88. The segment at 121–154 is disordered; it reads GLGQPQVAPPAPAASPAASSRPQPQNGSSGMGST. The segment covering 134 to 145 has biased composition (low complexity); that stretch reads ASPAASSRPQPQ. N6-acetyllysine; alternate occurs at positions 163 and 167. Glycyl lysine isopeptide (Lys-Gly) (interchain with G-Cter in ubiquitin); alternate cross-links involve residues K163 and K167. Position 180 is a phosphothreonine (T180). A Glycyl lysine isopeptide (Lys-Gly) (interchain with G-Cter in ubiquitin) cross-link involves residue K183. T191 is subject to Phosphothreonine. A DNA-binding region (OB) is located at residues 197–281; it reads WTICARVTNK…VKNDYEMTFN (85 aa). Residues K220 and K244 each participate in a glycyl lysine isopeptide (Lys-Gly) (interchain with G-Cter in ubiquitin) cross-link. Position 259 is an N6-acetyllysine; alternate (K259). K259 participates in a covalent cross-link: Glycyl lysine isopeptide (Lys-Gly) (interchain with G-Cter in ubiquitin); alternate. Residues K267 and K331 each participate in a glycyl lysine isopeptide (Lys-Gly) (interchain with G-Cter in ubiquitin) cross-link. S384 is subject to Phosphoserine. Glycyl lysine isopeptide (Lys-Gly) (interchain with G-Cter in ubiquitin) cross-links involve residues K410 and K431. K449 is covalently cross-linked (Glycyl lysine isopeptide (Lys-Gly) (interchain with G-Cter in SUMO)). K458 is covalently cross-linked (Glycyl lysine isopeptide (Lys-Gly) (interchain with G-Cter in ubiquitin)). Residues 481–503 form a C4-type zinc finger; it reads CPTQDCNKKVIDQQNGLYRCEKC. K553 is covalently cross-linked (Glycyl lysine isopeptide (Lys-Gly) (interchain with G-Cter in ubiquitin)). K577 is covalently cross-linked (Glycyl lysine isopeptide (Lys-Gly) (interchain with G-Cter in SUMO)).

This sequence belongs to the replication factor A protein 1 family. As to quaternary structure, component of the canonical replication protein A complex (RPA), a heterotrimer composed of RPA1, RPA2 and RPA3. Also a component of the aRPA, the alternative replication protein A complex, a trimeric complex similar to the replication protein A complex/RPA but where RPA1 and RPA3 are associated with RPA4 instead of RPA2. The DNA-binding activity may reside exclusively on the RPA1 subunit. Interacts with PRPF19; the PRP19-CDC5L complex is recruited to the sites of DNA repair where it ubiquitinates the replication protein A complex (RPA). Interacts with RIPK1. Interacts with the polymerase alpha subunit POLA1/p180; this interaction stabilizes the replicative complex and reduces the misincorporation rate of DNA polymerase alpha by acting as a fidelity clamp. Interacts with RAD51 and SENP6 to regulate DNA repair. Interacts with HELB; this interaction promotes HELB recruitment to chromatin following DNA damage. Interacts with PRIMPOL; leading to recruit PRIMPOL on chromatin and stimulate its DNA primase activity. Interacts with XPA; the interaction is direct and associates XPA with the RPA complex. Interacts with ETAA1; the interaction is direct and promotes ETAA1 recruitment at stalled replication forks. Interacts with RPA1; this interaction associates HROB with the RPA complex. Interacts (when poly-ADP-ribosylated) with HTATSF1. Interacts with BRIP1/FANCJ via this RPA1 subunit; following DNA damage they colocalize in foci in the nucleus. Post-translationally, DNA damage-induced 'Lys-63'-linked polyubiquitination by PRPF19 mediates ATRIP recruitment to the RPA complex at sites of DNA damage and activation of ATR. Ubiquitinated by RFWD3 at stalled replication forks in response to DNA damage: ubiquitination by RFWD3 does not lead to degradation by the proteasome and promotes removal of the RPA complex from stalled replication forks, promoting homologous recombination. In terms of processing, sumoylated on lysine residues Lys-449 and Lys-577, with Lys-449 being the major site. Sumoylation promotes recruitment of RAD51 to the DNA damage foci to initiate DNA repair through homologous recombination. Desumoylated by SENP6. Poly-ADP-ribosylated by PARP1; promoting recruitment of HTATSF1.

It localises to the nucleus. The protein resides in the PML body. Its function is as follows. As part of the heterotrimeric replication protein A complex (RPA/RP-A), binds and stabilizes single-stranded DNA intermediates that form during DNA replication or upon DNA stress. It prevents their reannealing and in parallel, recruits and activates different proteins and complexes involved in DNA metabolism. Thereby, it plays an essential role both in DNA replication and the cellular response to DNA damage. In the cellular response to DNA damage, the RPA complex controls DNA repair and DNA damage checkpoint activation. Through recruitment of ATRIP activates the ATR kinase a master regulator of the DNA damage response. It is required for the recruitment of the DNA double-strand break repair factors RAD51 and RAD52 to chromatin in response to DNA damage. Also recruits to sites of DNA damage proteins like XPA and XPG that are involved in nucleotide excision repair and is required for this mechanism of DNA repair. Also plays a role in base excision repair (BER) probably through interaction with UNG. Also recruits SMARCAL1/HARP, which is involved in replication fork restart, to sites of DNA damage. Plays a role in telomere maintenance. As part of the alternative replication protein A complex, aRPA, binds single-stranded DNA and probably plays a role in DNA repair. Compared to the RPA2-containing, canonical RPA complex, may not support chromosomal DNA replication and cell cycle progression through S-phase. The aRPA may not promote efficient priming by DNA polymerase alpha but could support DNA synthesis by polymerase delta in presence of PCNA and replication factor C (RFC), the dual incision/excision reaction of nucleotide excision repair and RAD51-dependent strand exchange. RPA stimulates 5'-3' helicase activity of the BRIP1/FANCJ. This Homo sapiens (Human) protein is Replication protein A 70 kDa DNA-binding subunit (RPA1).